We begin with the raw amino-acid sequence, 481 residues long: UDP-N-acetylmuramate--L-alanine ligase (481 aa).

123 to 129 (GTHGKTT) lines the ATP pocket.

It belongs to the MurCDEF family.

It localises to the cytoplasm. The enzyme catalyses UDP-N-acetyl-alpha-D-muramate + L-alanine + ATP = UDP-N-acetyl-alpha-D-muramoyl-L-alanine + ADP + phosphate + H(+). Its pathway is cell wall biogenesis; peptidoglycan biosynthesis. Functionally, cell wall formation. The chain is UDP-N-acetylmuramate--L-alanine ligase from Pseudomonas fluorescens (strain SBW25).